We begin with the raw amino-acid sequence, 733 residues long: Phosphoribosylformylglycinamidine synthase subunit PurL (733 aa).

Residue His41 is part of the active site. The ATP site is built by Tyr44 and Lys83. Glu85 is a binding site for Mg(2+). Substrate contacts are provided by residues 86–89 (SHNH) and Arg108. His87 (proton acceptor) is an active-site residue. Asp109 serves as a coordination point for Mg(2+). The interval 212–232 (GASFASQELSEESEEKRPSVQ) is disordered. Substrate is bound at residue Gln232. Asp260 is a binding site for Mg(2+). Residue 304–306 (ESQ) coordinates substrate. Residues Asp488 and Gly525 each contribute to the ATP site. Asn526 contributes to the Mg(2+) binding site. Ser528 serves as a coordination point for substrate.

Belongs to the FGAMS family. As to quaternary structure, monomer. Part of the FGAM synthase complex composed of 1 PurL, 1 PurQ and 2 PurS subunits.

The protein resides in the cytoplasm. It carries out the reaction N(2)-formyl-N(1)-(5-phospho-beta-D-ribosyl)glycinamide + L-glutamine + ATP + H2O = 2-formamido-N(1)-(5-O-phospho-beta-D-ribosyl)acetamidine + L-glutamate + ADP + phosphate + H(+). The protein operates within purine metabolism; IMP biosynthesis via de novo pathway; 5-amino-1-(5-phospho-D-ribosyl)imidazole from N(2)-formyl-N(1)-(5-phospho-D-ribosyl)glycinamide: step 1/2. Functionally, part of the phosphoribosylformylglycinamidine synthase complex involved in the purines biosynthetic pathway. Catalyzes the ATP-dependent conversion of formylglycinamide ribonucleotide (FGAR) and glutamine to yield formylglycinamidine ribonucleotide (FGAM) and glutamate. The FGAM synthase complex is composed of three subunits. PurQ produces an ammonia molecule by converting glutamine to glutamate. PurL transfers the ammonia molecule to FGAR to form FGAM in an ATP-dependent manner. PurS interacts with PurQ and PurL and is thought to assist in the transfer of the ammonia molecule from PurQ to PurL. The polypeptide is Phosphoribosylformylglycinamidine synthase subunit PurL (Thermoanaerobacter sp. (strain X514)).